A 103-amino-acid polypeptide reads, in one-letter code: Heme-copper oxidase subunit 4 (103 aa).

A run of 3 helical transmembrane segments spans residues 20–40, 42–62, and 75–95; these read VWIV…EGIA, NPFV…ALFF, and ITVS…TSVL.

The protein localises to the cell membrane. The protein is Heme-copper oxidase subunit 4 (aoxC) of Aeropyrum pernix (strain ATCC 700893 / DSM 11879 / JCM 9820 / NBRC 100138 / K1).